A 66-amino-acid chain; its full sequence is Large ribosomal subunit protein uL29 (66 aa).

The protein belongs to the universal ribosomal protein uL29 family.

The polypeptide is Large ribosomal subunit protein uL29 (Mesorhizobium japonicum (strain LMG 29417 / CECT 9101 / MAFF 303099) (Mesorhizobium loti (strain MAFF 303099))).